We begin with the raw amino-acid sequence, 445 residues long: Tubulin beta-3 chain (445 aa).

An MREI motif motif is present at residues 1–4 (MREI). GTP-binding residues include Q11, E69, S138, G142, T143, G144, N204, and N226. E69 contacts Mg(2+). Residues 425-445 (YQDATAEEEGEFEEEAEEEAE) are disordered. Residues 429 to 445 (TAEEEGEFEEEAEEEAE) are compositionally biased toward acidic residues. At E438 the chain carries 5-glutamyl polyglutamate.

The protein belongs to the tubulin family. As to quaternary structure, dimer of alpha and beta chains. A typical microtubule is a hollow water-filled tube with an outer diameter of 25 nm and an inner diameter of 15 nM. Alpha-beta heterodimers associate head-to-tail to form protofilaments running lengthwise along the microtubule wall with the beta-tubulin subunit facing the microtubule plus end conferring a structural polarity. Microtubules usually have 13 protofilaments but different protofilament numbers can be found in some organisms and specialized cells. The cofactor is Mg(2+). In terms of processing, some glutamate residues at the C-terminus are polyglycylated, resulting in polyglycine chains on the gamma-carboxyl group. Glycylation is mainly limited to tubulin incorporated into axonemes (cilia and flagella) whereas glutamylation is prevalent in neuronal cells, centrioles, axonemes, and the mitotic spindle. Both modifications can coexist on the same protein on adjacent residues, and lowering polyglycylation levels increases polyglutamylation, and reciprocally. The precise function of polyglycylation is still unclear. Some glutamate residues at the C-terminus are polyglutamylated, resulting in polyglutamate chains on the gamma-carboxyl group. Polyglutamylation plays a key role in microtubule severing by spastin (SPAST). SPAST preferentially recognizes and acts on microtubules decorated with short polyglutamate tails: severing activity by SPAST increases as the number of glutamates per tubulin rises from one to eight, but decreases beyond this glutamylation threshold. As to expression, highly expressed in testis.

It is found in the cytoplasm. The protein localises to the cytoskeleton. Tubulin is the major constituent of microtubules, a cylinder consisting of laterally associated linear protofilaments composed of alpha- and beta-tubulin heterodimers. Microtubules grow by the addition of GTP-tubulin dimers to the microtubule end, where a stabilizing cap forms. Below the cap, tubulin dimers are in GDP-bound state, owing to GTPase activity of alpha-tubulin. TUBB3 plays a role in dorsal root ganglion axon projection towards the spinal cord. This chain is Tubulin beta-3 chain, found in Gallus gallus (Chicken).